The chain runs to 134 residues: FK506-binding protein 2 (134 aa).

A signal peptide spans 1–19 (MRFSIFSTLLVSLATLSTA). One can recognise a PPIase FKBP-type domain in the interval 39 to 127 (GDTVQMHYKG…IFETELVGID (89 aa)). The short motif at 131–134 (KDEL) is the Prevents secretion from ER element.

The protein belongs to the FKBP-type PPIase family. FKBP2 subfamily.

It localises to the endoplasmic reticulum. It carries out the reaction [protein]-peptidylproline (omega=180) = [protein]-peptidylproline (omega=0). Inhibited by both FK506 and rapamycin. In terms of biological role, PPIases accelerate the folding of proteins. It catalyzes the cis-trans isomerization of proline imidic peptide bonds in oligopeptides. The protein is FK506-binding protein 2 (fpr2) of Aspergillus oryzae (strain ATCC 42149 / RIB 40) (Yellow koji mold).